A 140-amino-acid polypeptide reads, in one-letter code: Large ribosomal subunit protein bL17 (140 aa).

This sequence belongs to the bacterial ribosomal protein bL17 family. As to quaternary structure, part of the 50S ribosomal subunit. Contacts protein L32.

The chain is Large ribosomal subunit protein bL17 from Rhizobium leguminosarum bv. trifolii (strain WSM2304).